Reading from the N-terminus, the 169-residue chain is Fumarase E (169 aa).

Belongs to the MtlR/FumE family.

It catalyses the reaction (S)-malate = fumarate + H2O. Functionally, in vitro catalyzes the addition of water to fumarate, forming malate. Cannot catalyze the reverse reaction. Cannot use the cis-isomer maleate as substrate. This chain is Fumarase E, found in Escherichia coli (strain K12).